Here is a 441-residue protein sequence, read N- to C-terminus: MSAITEIYAREVLDSRGNPTVEAEVYTQDGGFGRGIVPSGASTGEHEAVELRDGDKDRYMGKGVTKAVANVNDIIAKEIVGYEVTDQVAIDKAMIALDGTPNKGKLGANAILAVSIAVARAAADELQVPLYNYIGGFNAHVLPTPMMNVINGGAHSDNKVDFQEFMIMPVGAPTVKEAIRMGSETFHHLQKLLAADGKVTSVGDEGGFAPDFANNEEPLEYLIKAIEAAGYKPGKDIAIAVDVASSELWDNDSKKYKLRWSTGEEFTTEEFIKYLEGLVAKYPIISIEDPIDENNWDDWVTITSELGKKVQLVGDDFFVTNTEYLRKGIKMGAANSILIKVNQIGTLTETMEAIEMAKEAGYTAIVSHRSGETEDTTIADLVVATNAGQIKTGSMSRTDRLAKYNQLMRIEDQLTDLVAKYKGINSFYNLSEQARQDIINK.

Residue Q163 participates in (2R)-2-phosphoglycerate binding. Residue E205 is the Proton donor of the active site. Mg(2+) contacts are provided by D242, E288, and D315. (2R)-2-phosphoglycerate is bound by residues K340, R369, S370, and K391. K340 acts as the Proton acceptor in catalysis.

This sequence belongs to the enolase family. It depends on Mg(2+) as a cofactor.

Its subcellular location is the cytoplasm. The protein resides in the secreted. The protein localises to the cell surface. It catalyses the reaction (2R)-2-phosphoglycerate = phosphoenolpyruvate + H2O. It participates in carbohydrate degradation; glycolysis; pyruvate from D-glyceraldehyde 3-phosphate: step 4/5. In terms of biological role, catalyzes the reversible conversion of 2-phosphoglycerate (2-PG) into phosphoenolpyruvate (PEP). It is essential for the degradation of carbohydrates via glycolysis. The sequence is that of Enolase from Ligilactobacillus salivarius (strain UCC118) (Lactobacillus salivarius).